Consider the following 138-residue polypeptide: ATP synthase epsilon chain (138 aa).

It belongs to the ATPase epsilon chain family. F-type ATPases have 2 components, CF(1) - the catalytic core - and CF(0) - the membrane proton channel. CF(1) has five subunits: alpha(3), beta(3), gamma(1), delta(1), epsilon(1). CF(0) has three main subunits: a, b and c.

It is found in the cell membrane. Produces ATP from ADP in the presence of a proton gradient across the membrane. The chain is ATP synthase epsilon chain from Streptococcus pyogenes serotype M2 (strain MGAS10270).